A 493-amino-acid polypeptide reads, in one-letter code: Galactose-1-phosphate uridylyltransferase (493 aa).

The protein belongs to the galactose-1-phosphate uridylyltransferase type 2 family.

It is found in the cytoplasm. The enzyme catalyses alpha-D-galactose 1-phosphate + UDP-alpha-D-glucose = alpha-D-glucose 1-phosphate + UDP-alpha-D-galactose. The protein operates within carbohydrate metabolism; galactose metabolism. The polypeptide is Galactose-1-phosphate uridylyltransferase (galT) (Lactococcus lactis subsp. lactis (strain IL1403) (Streptococcus lactis)).